We begin with the raw amino-acid sequence, 239 residues long: Purine nucleoside phosphorylase DeoD-type (239 aa).

His5 is an a purine D-ribonucleoside binding site. Phosphate contacts are provided by residues Gly21, Arg25, Arg44, and 88–91 (RVGS). Residues 180–182 (EME) and 204–205 (SD) contribute to the a purine D-ribonucleoside site. Asp205 acts as the Proton donor in catalysis.

It belongs to the PNP/UDP phosphorylase family. As to quaternary structure, homohexamer; trimer of homodimers.

It catalyses the reaction a purine D-ribonucleoside + phosphate = a purine nucleobase + alpha-D-ribose 1-phosphate. The catalysed reaction is a purine 2'-deoxy-D-ribonucleoside + phosphate = a purine nucleobase + 2-deoxy-alpha-D-ribose 1-phosphate. Functionally, catalyzes the reversible phosphorolytic breakdown of the N-glycosidic bond in the beta-(deoxy)ribonucleoside molecules, with the formation of the corresponding free purine bases and pentose-1-phosphate. The chain is Purine nucleoside phosphorylase DeoD-type from Salmonella gallinarum (strain 287/91 / NCTC 13346).